Here is a 275-residue protein sequence, read N- to C-terminus: Large ribosomal subunit protein uL2 (275 aa).

A disordered region spans residues 224 to 251 (VMNPVDHPHGGGEGRSPIGRKAPVTPWG).

Belongs to the universal ribosomal protein uL2 family. As to quaternary structure, part of the 50S ribosomal subunit. Forms a bridge to the 30S subunit in the 70S ribosome.

In terms of biological role, one of the primary rRNA binding proteins. Required for association of the 30S and 50S subunits to form the 70S ribosome, for tRNA binding and peptide bond formation. It has been suggested to have peptidyltransferase activity; this is somewhat controversial. Makes several contacts with the 16S rRNA in the 70S ribosome. The polypeptide is Large ribosomal subunit protein uL2 (Heliobacterium modesticaldum (strain ATCC 51547 / Ice1)).